The primary structure comprises 207 residues: Ribosomal RNA small subunit methyltransferase G (207 aa).

Residues Gly73, Leu78, 124–125, and Arg139 contribute to the S-adenosyl-L-methionine site; that span reads VE.

This sequence belongs to the methyltransferase superfamily. RNA methyltransferase RsmG family.

The protein resides in the cytoplasm. The catalysed reaction is guanosine(527) in 16S rRNA + S-adenosyl-L-methionine = N(7)-methylguanosine(527) in 16S rRNA + S-adenosyl-L-homocysteine. Specifically methylates the N7 position of guanine in position 527 of 16S rRNA. This is Ribosomal RNA small subunit methyltransferase G from Klebsiella pneumoniae (strain 342).